The chain runs to 31 residues: MSDIN-like toxin proprotein 8 (31 aa).

The propeptide occupies 1-10 (MSDINTARLP). Positions 11–18 (CIGFLGIP) form a cross-link, cyclopeptide (Cys-Pro). The propeptide occupies 19 to 31 (SVGDDIEMVLRHG).

The protein belongs to the MSDIN fungal toxin family. Post-translationally, processed by the macrocyclase-peptidase enzyme POPB to yield a toxic cyclic octapeptide. POPB first removes 10 residues from the N-terminus. Conformational trapping of the remaining peptide forces the enzyme to release this intermediate rather than proceed to macrocyclization. The enzyme rebinds the remaining peptide in a different conformation and catalyzes macrocyclization of the N-terminal 8 residues.

Probable toxin that belongs to the MSDIN-like toxin family responsible for a large number of food poisoning cases and deaths. The chain is MSDIN-like toxin proprotein 8 from Amanita bisporigera (Destroying angel).